The following is a 558-amino-acid chain: Formate--tetrahydrofolate ligase (558 aa).

65-72 (TPAGEGKT) provides a ligand contact to ATP.

Belongs to the formate--tetrahydrofolate ligase family.

It carries out the reaction (6S)-5,6,7,8-tetrahydrofolate + formate + ATP = (6R)-10-formyltetrahydrofolate + ADP + phosphate. Its pathway is one-carbon metabolism; tetrahydrofolate interconversion. The chain is Formate--tetrahydrofolate ligase from Methylobacterium sp. (strain 4-46).